The sequence spans 312 residues: MKKSSIVATIITILSGSANAASSQLIPNISPDSFTVAASTGMLSGKSHEMLYDAETGRKISQLDWKIKNVAILKGDISWDPYSFLTLNARGWTSLASGSGNMDDYDWMNENQSEWTDHSSHPATNVNHANEYDLNVKGWLLQDENYKAGITAGYQETRFSWTATGGSYSYNNGAYTGNFPKGVRVIGYNQRFSMPYIGLAGQYRINDFELNALFKFSDWVRAHDNDEHYMRDLTFREKTSGSRYYGTVINAGYYVTPNAKVFAEFTYSKYDEGKGGTQTIDKNSGDSVSIGGDAAGISNKNYTVTAGLQYRF.

The first 20 residues, 1-20 (MKKSSIVATIITILSGSANA), serve as a signal peptide directing secretion. At 21–31 (ASSQLIPNISP) the chain is on the periplasmic side. Residues 32 to 40 (DSFTVAAST) form a beta stranded membrane-spanning segment. Residues 41 to 70 (GMLSGKSHEMLYDAETGRKISQLDWKIKNV) are Extracellular-facing. Residues 71–80 (AILKGDISWD) traverse the membrane as a beta stranded segment. The Periplasmic segment spans residues 81–84 (PYSF). The chain crosses the membrane as a beta stranded span at residues 85 to 94 (LTLNARGWTS). Residues 95–131 (LASGSGNMDDYDWMNENQSEWTDHSSHPATNVNHANE) are Extracellular-facing. Residues D104 and D106 contribute to the active site. Residues 132–140 (YDLNVKGWL) traverse the membrane as a beta stranded segment. Residues 141–145 (LQDEN) lie on the Periplasmic side of the membrane. A beta stranded membrane pass occupies residues 146–154 (YKAGITAGY). At 155 to 194 (QETRFSWTATGGSYSYNNGAYTGNFPKGVRVIGYNQRFSM) the chain is on the extracellular side. The chain crosses the membrane as a beta stranded span at residues 195 to 204 (PYIGLAGQYR). Over 205–207 (IND) the chain is Periplasmic. Residues 208–216 (FELNALFKF) form a beta stranded membrane-spanning segment. Residues 217–244 (SDWVRAHDNDEHYMRDLTFREKTSGSRY) are Extracellular-facing. Active-site residues include D226 and H228. Residues 245-255 (YGTVINAGYYV) form a beta stranded membrane-spanning segment. Topologically, residues 256–258 (TPN) are periplasmic. Residues 259–267 (AKVFAEFTY) traverse the membrane as a beta stranded segment. At 268 to 301 (SKYDEGKGGTQTIDKNSGDSVSIGGDAAGISNKN) the chain is on the extracellular side. A beta stranded transmembrane segment spans residues 302 to 312 (YTVTAGLQYRF).

The protein belongs to the peptidase A26 family.

It is found in the cell outer membrane. It carries out the reaction Converts human Glu-plasminogen to plasmin by cleaving the 560-Arg-|-Val-561 peptide bond that is also hydrolyzed by the mammalian u-plasminogen activator and t-plasminogen activator. Also cleaves arginyl bonds in other proteins.. Its activity is regulated as follows. Requires bacterial lipopolysaccharide (LPS) for activation; addition of LPS to inactive protein reactivates it. In the absence of LPS the active site groove is slightly narrower, and peptide substrate binds deep within the active site groove, displacing the nucleophilic water molecule. Functionally, in the mammalian host activates (cleaves) plasminogen to generate the serine protease plasmin. Plasmin degrades fibrin clots (fibrinolysis) and facilitates bacterial cell migration, enabling rapid dissemination of bacteria from the initial site of infection. Cleaves host plasminogen to generate plasmin and probably also has autocatalytic activity. Fibrinolytic activity prevails at 37 degrees Celsius whereas coagulase expression predominates at lower temperatures (28 degrees Celsius). Cleaves plasminogen; plasminogen cleavage is much higher than coagulase activity. This Yersinia pestis protein is Plasminogen activator.